A 439-amino-acid chain; its full sequence is Amino-acid acetyltransferase (439 aa).

An N-acetyltransferase domain is found at 289 to 429; the sequence is EDIRIATVQD…DHYNYQRRSK (141 aa).

It belongs to the acetyltransferase family. ArgA subfamily.

It is found in the cytoplasm. It carries out the reaction L-glutamate + acetyl-CoA = N-acetyl-L-glutamate + CoA + H(+). Its pathway is amino-acid biosynthesis; L-arginine biosynthesis; N(2)-acetyl-L-ornithine from L-glutamate: step 1/4. The chain is Amino-acid acetyltransferase from Mannheimia succiniciproducens (strain KCTC 0769BP / MBEL55E).